The chain runs to 689 residues: Small ribosomal subunit protein mS39 (689 aa).

A mitochondrion-targeting transit peptide spans 1–37 (MAGVSAVRWLGLRSRLGQPLTGRRAGLCKQARSCRFY). N6-acetyllysine is present on Lys-126. PPR repeat units lie at residues 149-183 (IKDI…GTTV), 184-219 (SLET…EALE), 255-289 (NAHS…RLHA), 290-330 (DVYT…KVKP), 331-367 (NLQT…GIEP), 368-404 (SLAT…MGKR), 412-446 (DDKF…DNWK), 454-488 (RNFY…VYFP), 489-523 (HSQT…GHTF), and 572-606 (PATS…NKIP). The tract at residues 665-689 (NLTALTSDSDTDSSSDSDSDTSEGK) is disordered. Residues 673–689 (SDTDSSSDSDSDTSEGK) show a composition bias toward acidic residues.

It belongs to the mitochondrion-specific ribosomal protein mS39 family. As to quaternary structure, component of the mitochondrial ribosome small subunit (28S) which comprises a 12S rRNA and about 30 distinct proteins. Associated with the 12S mitochondrial rRNA (12S mt-rRNA).

It is found in the mitochondrion. Mitochondrial RNA-binding protein that has a role in mitochondrial translation. The sequence is that of Small ribosomal subunit protein mS39 (PTCD3) from Pongo abelii (Sumatran orangutan).